The primary structure comprises 350 residues: ATPase GET3 (350 aa).

Position 26-33 (26-33 (KGGVGKTT)) interacts with ATP. Residue aspartate 57 is part of the active site. ATP is bound by residues glutamate 243 and asparagine 270. Residues cysteine 282 and cysteine 285 each coordinate Zn(2+).

The protein belongs to the arsA ATPase family. Homodimer. Component of the Golgi to ER traffic (GET) complex, which is composed of GET1, GET2 and GET3. Within the complex, GET1 and GET2 form a heterotetramer which is stabilized by phosphatidylinositol binding and which binds to the GET3 homodimer. Interacts with the chloride channel protein GEF1.

Its subcellular location is the cytoplasm. The protein localises to the endoplasmic reticulum. The protein resides in the golgi apparatus. ATPase required for the post-translational delivery of tail-anchored (TA) proteins to the endoplasmic reticulum. Recognizes and selectively binds the transmembrane domain of TA proteins in the cytosol. This complex then targets to the endoplasmic reticulum by membrane-bound receptors GET1 and GET2, where the tail-anchored protein is released for insertion. This process is regulated by ATP binding and hydrolysis. ATP binding drives the homodimer towards the closed dimer state, facilitating recognition of newly synthesized TA membrane proteins. ATP hydrolysis is required for insertion. Subsequently, the homodimer reverts towards the open dimer state, lowering its affinity for the GET1-GET2 receptor, and returning it to the cytosol to initiate a new round of targeting. Cooperates with the HDEL receptor ERD2 to mediate the ATP-dependent retrieval of resident ER proteins that contain a C-terminal H-D-E-L retention signal from the Golgi to the ER. Involved in low-level resistance to the oxyanions arsenite and arsenate, and in heat tolerance. This chain is ATPase GET3, found in Candida albicans (strain SC5314 / ATCC MYA-2876) (Yeast).